The sequence spans 292 residues: Ribosomal protein L11 methyltransferase (292 aa).

Positions 144, 165, 187, and 229 each coordinate S-adenosyl-L-methionine.

The protein belongs to the methyltransferase superfamily. PrmA family.

Its subcellular location is the cytoplasm. It carries out the reaction L-lysyl-[protein] + 3 S-adenosyl-L-methionine = N(6),N(6),N(6)-trimethyl-L-lysyl-[protein] + 3 S-adenosyl-L-homocysteine + 3 H(+). Its function is as follows. Methylates ribosomal protein L11. In Pseudomonas putida (strain ATCC 47054 / DSM 6125 / CFBP 8728 / NCIMB 11950 / KT2440), this protein is Ribosomal protein L11 methyltransferase.